A 115-amino-acid chain; its full sequence is Dolichyl-diphosphooligosaccharide--protein glycosyltransferase subunit DAD1 (115 aa).

Over 1 to 31 the chain is Cytoplasmic; it reads MARSTSKDAQALIQSLRSAYAATPSNLKIID. Residues 32–52 traverse the membrane as a helical segment; sequence LYVVFAVFTALIQVVYMAIVG. At 53–55 the chain is on the lumenal side; sequence SFP. The chain crosses the membrane as a helical span at residues 56–76; that stretch reads FNAFLSGLLSCIGTAVLAVCL. At 77–94 the chain is on the cytoplasmic side; that stretch reads RIQVNKENKEFKDLAPER. Residues 95–115 form a helical membrane-spanning segment; the sequence is AFADFVLCNLVLHLVIMNFLG.

It belongs to the DAD/OST2 family. In terms of assembly, component of the oligosaccharyltransferase (OST) complex.

Its subcellular location is the endoplasmic reticulum membrane. It participates in protein modification; protein glycosylation. Its function is as follows. Subunit of the oligosaccharyl transferase (OST) complex that catalyzes the initial transfer of a defined glycan (Glc(3)Man(9)GlcNAc(2) in eukaryotes) from the lipid carrier dolichol-pyrophosphate to an asparagine residue within an Asn-X-Ser/Thr consensus motif in nascent polypeptide chains, the first step in protein N-glycosylation. N-glycosylation occurs cotranslationally and the complex associates with the Sec61 complex at the channel-forming translocon complex that mediates protein translocation across the endoplasmic reticulum (ER). All subunits are required for a maximal enzyme activity. This is Dolichyl-diphosphooligosaccharide--protein glycosyltransferase subunit DAD1 (DAD1) from Betula pendula (European white birch).